Here is a 198-residue protein sequence, read N- to C-terminus: Holliday junction branch migration complex subunit RuvA (198 aa).

The segment at methionine 1–histidine 63 is domain I. A domain II region spans residues threonine 64–lysine 142. The segment at alanine 143–lysine 147 is flexible linker. Positions alanine 148–glycine 198 are domain III.

The protein belongs to the RuvA family. In terms of assembly, homotetramer. Forms an RuvA(8)-RuvB(12)-Holliday junction (HJ) complex. HJ DNA is sandwiched between 2 RuvA tetramers; dsDNA enters through RuvA and exits via RuvB. An RuvB hexamer assembles on each DNA strand where it exits the tetramer. Each RuvB hexamer is contacted by two RuvA subunits (via domain III) on 2 adjacent RuvB subunits; this complex drives branch migration. In the full resolvosome a probable DNA-RuvA(4)-RuvB(12)-RuvC(2) complex forms which resolves the HJ.

The protein localises to the cytoplasm. Its function is as follows. The RuvA-RuvB-RuvC complex processes Holliday junction (HJ) DNA during genetic recombination and DNA repair, while the RuvA-RuvB complex plays an important role in the rescue of blocked DNA replication forks via replication fork reversal (RFR). RuvA specifically binds to HJ cruciform DNA, conferring on it an open structure. The RuvB hexamer acts as an ATP-dependent pump, pulling dsDNA into and through the RuvAB complex. HJ branch migration allows RuvC to scan DNA until it finds its consensus sequence, where it cleaves and resolves the cruciform DNA. In Streptococcus pyogenes serotype M1, this protein is Holliday junction branch migration complex subunit RuvA.